A 79-amino-acid chain; its full sequence is Conotoxin VnMSGL-0122 (79 aa).

A signal peptide spans 1–20 (MSGLGIMVLALLLLVFMATS). Residues 21–44 (HQDGGGKQATQRDAINVRRRRSIT) constitute a propeptide that is removed on maturation. 3 disulfides stabilise this stretch: C52/C64, C56/C73, and C63/C77. Leucine amide is present on L78.

Belongs to the conotoxin O3 superfamily. In terms of tissue distribution, expressed by the venom duct.

It is found in the secreted. In Conus ventricosus (Mediterranean cone), this protein is Conotoxin VnMSGL-0122.